The sequence spans 121 residues: ATP synthase epsilon chain (121 aa).

This sequence belongs to the ATPase epsilon chain family. As to quaternary structure, F-type ATPases have 2 components, CF(1) - the catalytic core - and CF(0) - the membrane proton channel. CF(1) has five subunits: alpha(3), beta(3), gamma(1), delta(1), epsilon(1). CF(0) has three main subunits: a, b and c.

The protein resides in the cell membrane. In terms of biological role, produces ATP from ADP in the presence of a proton gradient across the membrane. In Mycobacterium avium (strain 104), this protein is ATP synthase epsilon chain.